A 57-amino-acid polypeptide reads, in one-letter code: DNA-directed RNA polymerase subunit Rpo6 (57 aa).

This sequence belongs to the archaeal Rpo6/eukaryotic RPB6 RNA polymerase subunit family. Part of the RNA polymerase complex.

Its subcellular location is the cytoplasm. The enzyme catalyses RNA(n) + a ribonucleoside 5'-triphosphate = RNA(n+1) + diphosphate. In terms of biological role, DNA-dependent RNA polymerase (RNAP) catalyzes the transcription of DNA into RNA using the four ribonucleoside triphosphates as substrates. The protein is DNA-directed RNA polymerase subunit Rpo6 of Haloarcula marismortui (strain ATCC 43049 / DSM 3752 / JCM 8966 / VKM B-1809) (Halobacterium marismortui).